The following is a 282-amino-acid chain: Alpha/beta-gliadin A-III (282 aa).

A signal peptide spans 1 to 20 (MKTFLILALLAIVATTATSA). The segment covering 27 to 59 (QLQPQNPSQQQPQEQVPLMQQQQQFPGQQEQFP) has biased composition (low complexity). 2 disordered regions span residues 27–122 (QLQP…AQQQ) and 220–240 (SGQV…SVQP). The span at 60 to 111 (PQQPYPHQQPFPSQQPYPQPQPFPPQLPYPQTQPFPPQQPYPQPQPQYPQPQ) shows a compositional bias: pro residues. A compositionally biased stretch (low complexity) spans 112–122 (QPISQQQAQQQ). Positions 224-240 (SFQSSQQNPQAQGSVQP) are enriched in polar residues.

It belongs to the gliadin/glutenin family. Substrate of transglutaminase.

Gliadin is the major seed storage protein in wheat. The polypeptide is Alpha/beta-gliadin A-III (Triticum aestivum (Wheat)).